The chain runs to 243 residues: MAKVEQVLSLEPQHELKFRGPFTDVVTTNLKLGNPTDRNVCFKVKTTVPRRYCVRPNSGVIDAGASLNVSVMLQPFDYDPNEKSKHKFMVQSMFAPPDTSDMEAVWKEAKPEDLMDSKLRCVFELPAENAKPHDVEINKIIPTSASKTEAPAAAKSLTSPLDDTEVKKVMEECRRLQGEVQRLREESRQLKEEDGLRVRKAMPSNSPVAALAATGKEEGLSARLLALVVLFFIVGVIIGKIAL.

N-acetylalanine is present on Ala2. The Cytoplasmic portion of the chain corresponds to 2-218 (AKVEQVLSLE…AALAATGKEE (217 aa)). Residues 7–124 (VLSLEPQHEL…MDSKLRCVFE (118 aa)) form the MSP domain. Phosphoserine is present on Ser146. Residue Lys147 forms a Glycyl lysine isopeptide (Lys-Gly) (interchain with G-Cter in SUMO1) linkage. Phosphoserine occurs at positions 156 and 159. A coiled-coil region spans residues 161–196 (LDDTEVKKVMEECRRLQGEVQRLREESRQLKEEDGL). A Phosphoserine modification is found at Ser206. A helical; Anchor for type IV membrane protein membrane pass occupies residues 219–239 (GLSARLLALVVLFFIVGVIIG).

It belongs to the VAMP-associated protein (VAP) (TC 9.B.17) family. Homodimer, and heterodimer with VAPA. Interacts with VAMP1 and VAMP2. Interacts (via MSP domain) with ZFYVE27. Interacts with RMDN3. Interacts with KIF5A in a ZFYVE27-dependent manner. Interacts (via MSP domain) with STARD3 (via phospho-FFAT motif). Interacts with STARD3NL (via FFAT motif). Interacts with CERT1. Interacts with PLEKHA3 and SACM1L to form a ternary complex. Interacts with VPS13A (via FFAT motif). Interacts with RB1CC1 (via phosphorylated FFAT motif), MIGA2 (via phosphorylated FFAT motif), RMDN3 (via phosphorylated FFAT motif), OSBPL1A (via FFAT motif), KCNB1 (via phosphorylated FFAT motif) and KCNB2 (via phosphorylated FFAT motif). Interacts (via MSP domain) with WDR44 (via FFAT motif); the interactions connect the endoplasmic reticulum (ER) with the endosomal tubule.

It is found in the endoplasmic reticulum membrane. In terms of biological role, endoplasmic reticulum (ER)-anchored protein that mediates the formation of contact sites between the ER and endosomes via interaction with FFAT motif-containing proteins such as STARD3 or WDR44. Interacts with STARD3 in a FFAT motif phosphorylation dependent manner. Via interaction with WDR44 participates in neosynthesized protein export. Participates in the endoplasmic reticulum unfolded protein response (UPR) by inducing ERN1/IRE1 activity. Involved in cellular calcium homeostasis regulation. This is Vesicle-associated membrane protein-associated protein B from Mus musculus (Mouse).